We begin with the raw amino-acid sequence, 421 residues long: uncharacterized protein (421 aa).

CBS domains follow at residues 13 to 74 (MTKD…VRSL), 74 to 133 (LMYK…MKDT), 139 to 195 (MTRN…PKKK), and 217 to 274 (MNTP…KGAM).

This is an uncharacterized protein from Methanocaldococcus jannaschii (strain ATCC 43067 / DSM 2661 / JAL-1 / JCM 10045 / NBRC 100440) (Methanococcus jannaschii).